The chain runs to 438 residues: 3-phosphoshikimate 1-carboxyvinyltransferase 1 (438 aa).

Residues lysine 30, serine 31, and arginine 35 each contribute to the 3-phosphoshikimate site. Lysine 30 is a phosphoenolpyruvate binding site. Positions 104 and 132 each coordinate phosphoenolpyruvate. 3-phosphoshikimate contacts are provided by serine 178, serine 179, glutamine 180, serine 207, glutamate 326, and histidine 353. A phosphoenolpyruvate-binding site is contributed by glutamine 180. Glutamate 326 functions as the Proton acceptor in the catalytic mechanism. Phosphoenolpyruvate contacts are provided by arginine 357, arginine 398, and lysine 423.

This sequence belongs to the EPSP synthase family. In terms of assembly, monomer.

The protein resides in the cytoplasm. It carries out the reaction 3-phosphoshikimate + phosphoenolpyruvate = 5-O-(1-carboxyvinyl)-3-phosphoshikimate + phosphate. It functions in the pathway metabolic intermediate biosynthesis; chorismate biosynthesis; chorismate from D-erythrose 4-phosphate and phosphoenolpyruvate: step 6/7. Catalyzes the transfer of the enolpyruvyl moiety of phosphoenolpyruvate (PEP) to the 5-hydroxyl of shikimate-3-phosphate (S3P) to produce enolpyruvyl shikimate-3-phosphate and inorganic phosphate. In Streptomyces coelicolor (strain ATCC BAA-471 / A3(2) / M145), this protein is 3-phosphoshikimate 1-carboxyvinyltransferase 1.